The primary structure comprises 508 residues: Photosystem II CP47 reaction center protein (508 aa).

6 helical membrane-spanning segments follow: residues 21 to 36 (AVHL…WAGS), 101 to 115 (IVLS…IWHW), 140 to 156 (GIHL…FGAF), 203 to 218 (IAAG…FHLS), 237 to 252 (VLSS…AFVV), and 457 to 472 (CFAL…HGSR).

This sequence belongs to the PsbB/PsbC family. PsbB subfamily. As to quaternary structure, PSII is composed of 1 copy each of membrane proteins PsbA, PsbB, PsbC, PsbD, PsbE, PsbF, PsbH, PsbI, PsbJ, PsbK, PsbL, PsbM, PsbT, PsbX, PsbY, PsbZ, Psb30/Ycf12, at least 3 peripheral proteins of the oxygen-evolving complex and a large number of cofactors. It forms dimeric complexes. It depends on Binds multiple chlorophylls. PSII binds additional chlorophylls, carotenoids and specific lipids. as a cofactor.

It is found in the plastid. The protein localises to the chloroplast thylakoid membrane. One of the components of the core complex of photosystem II (PSII). It binds chlorophyll and helps catalyze the primary light-induced photochemical processes of PSII. PSII is a light-driven water:plastoquinone oxidoreductase, using light energy to abstract electrons from H(2)O, generating O(2) and a proton gradient subsequently used for ATP formation. This chain is Photosystem II CP47 reaction center protein, found in Zygnema circumcarinatum (Green alga).